A 338-amino-acid polypeptide reads, in one-letter code: Ketol-acid reductoisomerase (NADP(+)) (338 aa).

Residues 1-181 (MKVFYDKDCD…GGGRAGIIET (181 aa)) enclose the KARI N-terminal Rossmann domain. Residues 24-27 (YGSQ), R47, and S52 each bind NADP(+). Residue H107 is part of the active site. G133 is a binding site for NADP(+). The KARI C-terminal knotted domain occupies 182–327 (NFREETETDL…GKLRAMMPWI (146 aa)). 4 residues coordinate Mg(2+): D190, E194, E226, and E230. S251 contributes to the substrate binding site.

This sequence belongs to the ketol-acid reductoisomerase family. The cofactor is Mg(2+).

It carries out the reaction (2R)-2,3-dihydroxy-3-methylbutanoate + NADP(+) = (2S)-2-acetolactate + NADPH + H(+). The catalysed reaction is (2R,3R)-2,3-dihydroxy-3-methylpentanoate + NADP(+) = (S)-2-ethyl-2-hydroxy-3-oxobutanoate + NADPH + H(+). It functions in the pathway amino-acid biosynthesis; L-isoleucine biosynthesis; L-isoleucine from 2-oxobutanoate: step 2/4. Its pathway is amino-acid biosynthesis; L-valine biosynthesis; L-valine from pyruvate: step 2/4. Involved in the biosynthesis of branched-chain amino acids (BCAA). Catalyzes an alkyl-migration followed by a ketol-acid reduction of (S)-2-acetolactate (S2AL) to yield (R)-2,3-dihydroxy-isovalerate. In the isomerase reaction, S2AL is rearranged via a Mg-dependent methyl migration to produce 3-hydroxy-3-methyl-2-ketobutyrate (HMKB). In the reductase reaction, this 2-ketoacid undergoes a metal-dependent reduction by NADPH to yield (R)-2,3-dihydroxy-isovalerate. The polypeptide is Ketol-acid reductoisomerase (NADP(+)) (Bordetella bronchiseptica (strain ATCC BAA-588 / NCTC 13252 / RB50) (Alcaligenes bronchisepticus)).